The following is a 459-amino-acid chain: Glutamyl-tRNA reductase (459 aa).

Residues 49-52 (TCNR), Ser109, 114-116 (ETQ), and Gln120 contribute to the substrate site. The Nucleophile role is filled by Cys50. 189–194 (GAGKMG) provides a ligand contact to NADP(+).

This sequence belongs to the glutamyl-tRNA reductase family. In terms of assembly, homodimer.

It carries out the reaction (S)-4-amino-5-oxopentanoate + tRNA(Glu) + NADP(+) = L-glutamyl-tRNA(Glu) + NADPH + H(+). It participates in porphyrin-containing compound metabolism; protoporphyrin-IX biosynthesis; 5-aminolevulinate from L-glutamyl-tRNA(Glu): step 1/2. Catalyzes the NADPH-dependent reduction of glutamyl-tRNA(Glu) to glutamate 1-semialdehyde (GSA). The chain is Glutamyl-tRNA reductase from Halalkalibacterium halodurans (strain ATCC BAA-125 / DSM 18197 / FERM 7344 / JCM 9153 / C-125) (Bacillus halodurans).